The primary structure comprises 599 residues: Sodium-dependent phosphate transport protein 2C (599 aa).

The Cytoplasmic portion of the chain corresponds to 1–76 (MPSSLPGSQV…RRVAGSVLKA (76 aa)). S4 carries the phosphoserine modification. The chain crosses the membrane as a helical span at residues 77–97 (CGLLGSLYFFICSLDVLSSAF). The Extracellular segment spans residues 98-111 (QLLGSKVAGDIFKD). Residues 112 to 132 (NVVLSNPVAGLVIGVLVTALV) form a helical membrane-spanning segment. Over 133-188 (QSSSTSSSIVVSMVAAKLLTVRVSVPIIMGVNVGTSITSTLVSMAQSGDRDEFQRA) the chain is Cytoplasmic. The chain crosses the membrane as a helical span at residues 189–209 (FSGSAVHGIFNWLTVLVLLPL). Residues 210–322 (ESATALLERL…FAGTELTDLA (113 aa)) lie on the Extracellular side of the membrane. N-linked (GlcNAc...) asparagine glycans are attached at residues N265, N268, N286, and N299. A disulfide bond links C276 and C309. A helical transmembrane segment spans residues 323–343 (VGCILLAGSLLVLCGCLVLIV). Residues 344-367 (KLLNSVLRGRVAQVVRTVINADFP) lie on the Cytoplasmic side of the membrane. Residues 368–388 (FPLGWLGGYLAVLAGAGLTFA) traverse the membrane as a helical segment. Residues 389–445 (LQSSSVFTAAVVPLMGVGVISLDRAYPLLLGSNIGTTTTALLAALASPADRMLSALQ) are Extracellular-facing. Residues 446-466 (VALIHFFFNLAGILLWYLVPA) traverse the membrane as a helical segment. The Cytoplasmic portion of the chain corresponds to 467-485 (LRLPIPLARHFGVVTARYR). Residues 486 to 506 (WVAGVYLLLGFLLLPLAAFGL) form a helical membrane-spanning segment. Over 507–510 (SLAG) the chain is Extracellular. The chain crosses the membrane as a helical span at residues 511 to 531 (GMELAAVGGPLVGLVLLVILV). Topologically, residues 532–599 (TVLQRRRPAW…NPEILASQQL (68 aa)) are cytoplasmic.

It belongs to the SLC34A transporter family. Expressed only in the kidney.

The protein localises to the apical cell membrane. It carries out the reaction 2 Na(+)(out) + phosphate(out) = 2 Na(+)(in) + phosphate(in). Its function is as follows. Involved in actively transporting phosphate into cells via Na(+) cotransport in the renal brush border membrane. The cotransport has a Na(+):Pi stoichiometry of 2:1 and is electroneutral. The sequence is that of Sodium-dependent phosphate transport protein 2C (SLC34A3) from Homo sapiens (Human).